The primary structure comprises 319 residues: Annexin A4 (319 aa).

Ala-2 is modified (N-acetylalanine). Thr-7 carries the phosphothreonine modification. Ser-12 is modified (phosphoserine). Annexin repeat units lie at residues 14–85 (FNAM…GMMT), 86–157 (PTVL…SLSA), 169–241 (ALVR…AIVK), and 245–316 (NKSA…VLCG). An N6-acetyllysine mark is found at Lys-213, Lys-293, and Lys-300.

The protein belongs to the annexin family.

It is found in the zymogen granule membrane. In terms of biological role, calcium/phospholipid-binding protein which promotes membrane fusion and is involved in exocytosis. This is Annexin A4 from Homo sapiens (Human).